We begin with the raw amino-acid sequence, 92 residues long: Acylphosphatase (92 aa).

The Acylphosphatase-like domain occupies 3-90 (RVHVLVAGRV…GEFTEFAVLR (88 aa)). Residues R18 and N36 contribute to the active site.

The protein belongs to the acylphosphatase family.

It carries out the reaction an acyl phosphate + H2O = a carboxylate + phosphate + H(+). This chain is Acylphosphatase (acyP), found in Methylococcus capsulatus (strain ATCC 33009 / NCIMB 11132 / Bath).